The following is a 285-amino-acid chain: Pantothenate synthetase (285 aa).

30-37 (MGNLHQGH) is a binding site for ATP. Histidine 37 (proton donor) is an active-site residue. Position 61 (glutamine 61) interacts with (R)-pantoate. A beta-alanine-binding site is contributed by glutamine 61. 149–152 (GQKD) serves as a coordination point for ATP. A (R)-pantoate-binding site is contributed by glutamine 155. ATP-binding positions include valine 178 and 186 to 189 (LSSR).

This sequence belongs to the pantothenate synthetase family. Homodimer.

It is found in the cytoplasm. The catalysed reaction is (R)-pantoate + beta-alanine + ATP = (R)-pantothenate + AMP + diphosphate + H(+). It participates in cofactor biosynthesis; (R)-pantothenate biosynthesis; (R)-pantothenate from (R)-pantoate and beta-alanine: step 1/1. In terms of biological role, catalyzes the condensation of pantoate with beta-alanine in an ATP-dependent reaction via a pantoyl-adenylate intermediate. The polypeptide is Pantothenate synthetase (Aeromonas hydrophila subsp. hydrophila (strain ATCC 7966 / DSM 30187 / BCRC 13018 / CCUG 14551 / JCM 1027 / KCTC 2358 / NCIMB 9240 / NCTC 8049)).